The chain runs to 397 residues: Chorismate synthase (397 aa).

Residues Arg-40 and Arg-46 each coordinate NADP(+). FMN-binding positions include 129–131, 257–258, Gly-302, 317–321, and Arg-343; these read RAS, QA, and KPIAT.

Belongs to the chorismate synthase family. In terms of assembly, homotetramer. Requires FMNH2 as cofactor.

The enzyme catalyses 5-O-(1-carboxyvinyl)-3-phosphoshikimate = chorismate + phosphate. It functions in the pathway metabolic intermediate biosynthesis; chorismate biosynthesis; chorismate from D-erythrose 4-phosphate and phosphoenolpyruvate: step 7/7. In terms of biological role, catalyzes the anti-1,4-elimination of the C-3 phosphate and the C-6 proR hydrogen from 5-enolpyruvylshikimate-3-phosphate (EPSP) to yield chorismate, which is the branch point compound that serves as the starting substrate for the three terminal pathways of aromatic amino acid biosynthesis. This reaction introduces a second double bond into the aromatic ring system. This chain is Chorismate synthase, found in Prosthecochloris aestuarii (strain DSM 271 / SK 413).